Reading from the N-terminus, the 135-residue chain is Small ribosomal subunit protein uS8 (135 aa).

The protein belongs to the universal ribosomal protein uS8 family. Part of the 30S ribosomal subunit. Contacts proteins S5 and S12.

In terms of biological role, one of the primary rRNA binding proteins, it binds directly to 16S rRNA central domain where it helps coordinate assembly of the platform of the 30S subunit. The sequence is that of Small ribosomal subunit protein uS8 from Nocardioides sp. (strain ATCC BAA-499 / JS614).